The sequence spans 70 residues: Protein SlyX homolog (70 aa).

It belongs to the SlyX family.

The chain is Protein SlyX homolog from Shewanella putrefaciens (strain CN-32 / ATCC BAA-453).